The primary structure comprises 470 residues: Aminodeoxychorismate synthase component 1 (470 aa).

Belongs to the anthranilate synthase component I family. In terms of assembly, monomer. Heterodimer consisting of two non-identical subunits: a glutamine amidotransferase subunit (PabA) and a aminodeoxychorismate synthase subunit (PabB). Mg(2+) is required as a cofactor.

The catalysed reaction is chorismate + L-glutamine = 4-amino-4-deoxychorismate + L-glutamate. Its pathway is cofactor biosynthesis; tetrahydrofolate biosynthesis; 4-aminobenzoate from chorismate: step 1/2. Its function is as follows. Part of a heterodimeric complex that catalyzes the two-step biosynthesis of 4-amino-4-deoxychorismate (ADC), a precursor of p-aminobenzoate (PABA) and tetrahydrofolate. In the first step, a glutamine amidotransferase (PabA) generates ammonia as a substrate that, along with chorismate, is used in the second step, catalyzed by aminodeoxychorismate synthase (PabB) to produce ADC. The sequence is that of Aminodeoxychorismate synthase component 1 (pabB) from Bacillus subtilis (strain 168).